The sequence spans 488 residues: GTPase Der (488 aa).

EngA-type G domains are found at residues 3 to 166 (PVVA…AEAM) and 199 to 372 (IKLA…DSAT). GTP contacts are provided by residues 9-16 (GRPNVGKS), 56-60 (DTGGI), 118-121 (NKVD), 205-212 (GKPNVGKS), 252-256 (DTAGV), and 317-320 (NKWD). The KH-like domain maps to 373-457 (RRVSTSMLTR…PIQLRFQEGD (85 aa)). The disordered stretch occupies residues 460 to 488 (FENKTEKLTMSQERRRKRAQSHIKDRKTK). Residues 473 to 488 (RRRKRAQSHIKDRKTK) show a composition bias toward basic residues.

Belongs to the TRAFAC class TrmE-Era-EngA-EngB-Septin-like GTPase superfamily. EngA (Der) GTPase family. Associates with the 50S ribosomal subunit.

Its function is as follows. GTPase that plays an essential role in the late steps of ribosome biogenesis. This is GTPase Der from Shewanella baltica (strain OS223).